The sequence spans 617 residues: MKMTLPFKPHVLALICSAGLCAASTGLYIKSRTVEAPVEPQSTQLAVSDAAAVTFPATVSAPPVTPAVVKSAFSTAQIDQWVAPVALYPDALLSQVLMASTYPTNVAQAVQWSHDNPLKQGDAAIQAVSDQPWDASVKSLVAFPQLMALMGENPQWVQNLGDAFLAQPQDVMDSVQRLRQLAQQTGSLKSSTEQKVITTTKKAVPVKQTVTAPVIPSNTVLTANPVITEPATTVISIEPANPDVVYIPNYNPTVVYGNWANTAYPPVYLPPPAGEPFVDSFVRGFGYSMGVATTYALFSSIDWDDDDHDHHHHDNDDYHHHDGGHRDGNGWQHNGDNINIDVNNFNRITGEHLTDKNMAWRHNPNYRNGVPYHDQDMAKRFHQTDVNGGMSATQLPAPTRDSQRQAAANQFQQRTHAAPVITRDTQRQAAAQRFNEAEHYGSYDDFHDFSRRQPLTQQQKDAARQRYQSASPEQRQAVRERMQTNPKIQQRREAARERIQSASPEQRQAVREKMQTNPQNQQRRDAARERIQSASPEQRQVFKEKVQQRPLNQQQRDNARQRVQSASPEQRQVFREKVQESRPQRLNDSNHTVRLNNEQRSAVCERLSERGARRLER.

The segment covering asparagine 387–proline 396 has biased composition (polar residues). Disordered stretches follow at residues asparagine 387–proline 419 and tyrosine 443–glutamine 599. Over residues arginine 404 to arginine 414 the composition is skewed to low complexity. Positions glutamine 453–glutamine 474 are enriched in polar residues. 2 stretches are compositionally biased toward basic and acidic residues: residues glutamine 490 to isoleucine 499 and glutamine 522 to isoleucine 531. A compositionally biased stretch (polar residues) spans arginine 549–glutamine 570. Over residues glutamine 572 to arginine 585 the composition is skewed to basic and acidic residues. A compositionally biased stretch (polar residues) spans leucine 586–glutamine 599.

This is an uncharacterized protein from Escherichia coli (strain K12).